Here is a 153-residue protein sequence, read N- to C-terminus: Transcriptional repressor NrdR (153 aa).

The segment at 3–34 (CPFCGYEDTRVLDSRELSEGRAIRRRRECPQC) is a zinc-finger region. Residues 49–139 (ITVIKKDGRR…VYKDFREIDQ (91 aa)) enclose the ATP-cone domain.

The protein belongs to the NrdR family. Zn(2+) is required as a cofactor.

Negatively regulates transcription of bacterial ribonucleotide reductase nrd genes and operons by binding to NrdR-boxes. The polypeptide is Transcriptional repressor NrdR (Fervidobacterium nodosum (strain ATCC 35602 / DSM 5306 / Rt17-B1)).